The primary structure comprises 493 residues: WAS/WASL-interacting protein family member 1 (493 aa).

Positions 1 to 14 (MPVPPPPAPPPPPT) are enriched in pro residues. The tract at residues 1-493 (MPVPPPPAPP…GAPPLPPIPR (493 aa)) is disordered. Residues 21–31 (EKPTLNKTEQA) show a composition bias toward polar residues. Positions 32–49 (GRNALLSDISKGKKLKKT) constitute a WH2 domain. Arg33 carries the post-translational modification Asymmetric dimethylarginine. The segment at 45-48 (KLKK) is binds actin. The segment covering 67–105 (ASAGGYGGGGGGGGGGGGGGGGSGGNFGGGGPPGLGGLF) has biased composition (gly residues). Residues Arg126 and Arg135 each carry the omega-N-methylarginine modification. 3 stretches are compositionally biased toward pro residues: residues 142–155 (FSPP…PAPS), 162–175 (PPEP…PPRP), and 183–195 (SLPP…PRPV). Position 143 is a phosphoserine (Ser143). Ser227 bears the Phosphoserine mark. 3 stretches are compositionally biased toward pro residues: residues 239-248 (FPRPPLPPTP), 274-290 (VPPP…PSTP), and 298-315 (APPP…PLPP). 2 positions are modified to phosphoserine: Ser330 and Ser340. A compositionally biased stretch (pro residues) spans 336–361 (PPLPSPGRSGPLPPPPSERPPPPVRD). 3 XRSGPXPPXP motif repeats span residues 342 to 351 (GRSGPLPPPP), 364 to 373 (GRSGPLPPPP), and 400 to 409 (PRSGPRPPLP). Positions 403–424 (GPRPPLPPDRPGAGAPPPPPPS) are enriched in pro residues. Residues 425-434 (TSVRNGFQDS) are compositionally biased toward polar residues. Residues 470–484 (ARNESRSGSNRRERG) are compositionally biased toward basic and acidic residues.

This sequence belongs to the verprolin family. In terms of assembly, binds to WAS within the N-terminal region, at a site distinct from the CDC42-binding site. Binds profilin and actin. Binds to WASL. Interacts with DBNL. Interacts with DBNL. Interacts with FNBP1L (via the SH3 domain).

Its subcellular location is the cytoplasmic vesicle. The protein localises to the cytoplasm. The protein resides in the cytoskeleton. It localises to the cell projection. It is found in the ruffle. Functionally, plays a role in the reorganization of the actin cytoskeleton. Contributes with NCK1 and GRB2 in the recruitment and activation of WASL. May participate in regulating the subcellular localization of WASL, resulting in the disassembly of stress fibers in favor of filopodia formation. Plays a role in the formation of cell ruffles. The chain is WAS/WASL-interacting protein family member 1 (Wipf1) from Mus musculus (Mouse).